We begin with the raw amino-acid sequence, 240 residues long: Uridylate kinase (240 aa).

ATP is bound at residue 12–15 (KLSG). The segment at 20–25 (GEQGFG) is involved in allosteric activation by GTP. Glycine 54 contributes to the UMP binding site. Residues glycine 55 and arginine 59 each contribute to the ATP site. Residues aspartate 74 and 135–142 (TGNPYFST) each bind UMP. 3 residues coordinate ATP: asparagine 163, tyrosine 169, and aspartate 172.

The protein belongs to the UMP kinase family. In terms of assembly, homohexamer.

It localises to the cytoplasm. It catalyses the reaction UMP + ATP = UDP + ADP. It functions in the pathway pyrimidine metabolism; CTP biosynthesis via de novo pathway; UDP from UMP (UMPK route): step 1/1. Allosterically activated by GTP. Inhibited by UTP. Catalyzes the reversible phosphorylation of UMP to UDP. The chain is Uridylate kinase from Bacillus cereus (strain ATCC 14579 / DSM 31 / CCUG 7414 / JCM 2152 / NBRC 15305 / NCIMB 9373 / NCTC 2599 / NRRL B-3711).